Here is a 248-residue protein sequence, read N- to C-terminus: 2,3-bisphosphoglycerate-dependent phosphoglycerate mutase (248 aa).

Residues 8 to 15 (RHGESGWN) and R58 contribute to the substrate site. The active-site Tele-phosphohistidine intermediate is the H9. The segment at 82-101 (GTGEDRTEREDGSRKDRKEK) is disordered. E124 serves as the catalytic Proton donor/acceptor. Substrate is bound by residues 124–127 (ERYY) and K135.

It belongs to the phosphoglycerate mutase family. BPG-dependent PGAM subfamily.

It catalyses the reaction (2R)-2-phosphoglycerate = (2R)-3-phosphoglycerate. The protein operates within carbohydrate degradation; glycolysis; pyruvate from D-glyceraldehyde 3-phosphate: step 3/5. Its function is as follows. Catalyzes the interconversion of 2-phosphoglycerate and 3-phosphoglycerate. This Methanosarcina acetivorans (strain ATCC 35395 / DSM 2834 / JCM 12185 / C2A) protein is 2,3-bisphosphoglycerate-dependent phosphoglycerate mutase.